The following is a 171-amino-acid chain: Shikimate kinase (171 aa).

14-19 (GAGKST) contributes to the ATP binding site. Residue Ser-18 participates in Mg(2+) binding. Residues Asp-36, Arg-60, and Gly-82 each coordinate substrate. Arg-120 provides a ligand contact to ATP. Arg-139 provides a ligand contact to substrate. Gln-156 contributes to the ATP binding site.

Belongs to the shikimate kinase family. In terms of assembly, monomer. Mg(2+) is required as a cofactor.

It is found in the cytoplasm. The catalysed reaction is shikimate + ATP = 3-phosphoshikimate + ADP + H(+). It participates in metabolic intermediate biosynthesis; chorismate biosynthesis; chorismate from D-erythrose 4-phosphate and phosphoenolpyruvate: step 5/7. Catalyzes the specific phosphorylation of the 3-hydroxyl group of shikimic acid using ATP as a cosubstrate. The chain is Shikimate kinase from Shewanella sediminis (strain HAW-EB3).